Reading from the N-terminus, the 393-residue chain is NAD(P)H-quinone oxidoreductase subunit H, chloroplastic (393 aa).

Belongs to the complex I 49 kDa subunit family. NDH is composed of at least 16 different subunits, 5 of which are encoded in the nucleus.

Its subcellular location is the plastid. The protein localises to the chloroplast thylakoid membrane. It carries out the reaction a plastoquinone + NADH + (n+1) H(+)(in) = a plastoquinol + NAD(+) + n H(+)(out). The enzyme catalyses a plastoquinone + NADPH + (n+1) H(+)(in) = a plastoquinol + NADP(+) + n H(+)(out). In terms of biological role, NDH shuttles electrons from NAD(P)H:plastoquinone, via FMN and iron-sulfur (Fe-S) centers, to quinones in the photosynthetic chain and possibly in a chloroplast respiratory chain. The immediate electron acceptor for the enzyme in this species is believed to be plastoquinone. Couples the redox reaction to proton translocation, and thus conserves the redox energy in a proton gradient. The chain is NAD(P)H-quinone oxidoreductase subunit H, chloroplastic from Manihot esculenta (Cassava).